Consider the following 684-residue polypeptide: Macrolide export ATP-binding/permease protein MacB (684 aa).

Residues 2 to 243 (IQLYGLRKDY…RSRLANSRAE (242 aa)) form the ABC transporter domain. 38 to 45 (GSSGSGKT) contributes to the ATP binding site. The next 5 helical transmembrane spans lie at 248–268 (PASA…VLAL), 275–295 (TVLT…TMEL), 563–583 (LVIA…IMLV), 615–635 (VLCV…SVLV), and 644–664 (AMSI…GIVF).

The protein belongs to the ABC transporter superfamily. Macrolide exporter (TC 3.A.1.122) family. In terms of assembly, homodimer.

It is found in the cell inner membrane. Non-canonical ABC transporter that contains transmembrane domains (TMD), which form a pore in the inner membrane, and an ATP-binding domain (NBD), which is responsible for energy generation. Confers resistance against macrolides. This Rhodopirellula baltica (strain DSM 10527 / NCIMB 13988 / SH1) protein is Macrolide export ATP-binding/permease protein MacB.